The primary structure comprises 491 residues: bZIP transcription factor hapX (491 aa).

Residues 19 to 73 are disordered; it reads AKPAISPSPGPGTPGSITSKEWVIPPRPKPGRKPATDTPPTKRKAQNRAAQRAFR. The 41-residue stretch at 55–95 folds into the bZIP domain; that stretch reads DTPPTKRKAQNRAAQRAFRERRAARVNELEEQIKKIEDEHE. Residues 60-79 form a basic motif region; that stretch reads KRKAQNRAAQRAFRERRAAR. Residues 83-90 form a leucine-zipper region; it reads LEEQIKKI. Positions 149–161 are enriched in basic and acidic residues; it reads SSLSDREAVRSDK. Disordered stretches follow at residues 149–196, 224–245, and 397–416; these read SSLS…REEV, EQSR…KPDP, and VSRG…SAAP. Positions 397–413 are enriched in low complexity; that stretch reads VSRGRSGSNNNTSSGSS.

The protein belongs to the bZIP family. YAP subfamily.

Its subcellular location is the nucleus. Functionally, transcription factor required for repression of genes during iron starvation. Represses iron-dependent and mitochondrial-localized activities including respiration, TCA cycle, amino acid metabolism, iron-sulfur-cluster and heme biosynthesis. Iron starvation causes a massive remodeling of the amino acid pool and hapX is essential for the coordination of the production of siderophores and their precursor ornithine. The protein is bZIP transcription factor hapX of Aspergillus fumigatus (strain ATCC MYA-4609 / CBS 101355 / FGSC A1100 / Af293) (Neosartorya fumigata).